The sequence spans 636 residues: MAQSTATSPDGGTTFEHLWSSLEPDSTYFDLPQSSRGNNEVVGGTDSSMDVFHLEGMTTSVMAQFNLLSSTMDQMSSRAASASPYTPEHAASVPTHSPYAQPSSTFDTMSPAPVIPSNTDYPGPHHFEVTFQQSSTAKSATWTYSPLLKKLYCQIAKTCPIQIKVSTPPPPGTAIRAMPVYKKAEHVTDVVKRCPNHELGRDFNEGQSAPASHLIRVEGNNLSQYVDDPVTGRQSVVVPYEPPQVGTEFTTILYNFMCNSSCVGGMNRRPILIIITLEMRDGQVLGRRSFEGRICACPGRDRKADEDHYREQQALNESSAKNGAASKRAFKQSPPAVPALGAGVKKRRHGDEDTYYLQVRGRENFEILMKLKESLELMELVPQPLVDSYRQQQQLLQRPSHLQPPSYGPVLSPMNKVHGGMNKLPSVNQLVGQPPPHSSAATPNLGPVGPGMLNNHGHAVPANGEMSSSHSAQSMVSGSHCTPPPPYHADPSLVSFLTGLGCPNCIEYFTSQGLQSIYHLQNLTIEDLGALKIPEQYRMTIWRGLQDLKQGHDYSTAQQLLRSSNAATISIGGSGELQRQRVMEAVHFRVRHTITIPNRGGPGGGPDEWADFGFDLPDCKARKQPIKEEFTEAEIH.

The segment at Met1–Asp46 is transactivation. Thr27 is modified (phosphothreonine; by PLK1). A Phosphotyrosine; by SRC and HCK modification is found at Tyr28. The tract at residues Arg78–Ser104 is disordered. Residues Pro94–Ser104 show a composition bias toward polar residues. Residue Tyr99 is modified to Phosphotyrosine; by ABL1. Residues Phe131 to Arg310 are DNA-binding. The Zn(2+) site is built by Cys194, His197, Cys258, and Cys262. The segment at Ala314–Lys345 is disordered. The interval Lys345–Leu380 is interaction with HIPK2. The oligomerization stretch occupies residues Lys345 to Val386. Residues Pro483–Tyr487 carry the PPxY motif motif. An SAM domain is found at Pro485–Gly551. A Glycyl lysine isopeptide (Lys-Gly) (interchain with G-Cter in SUMO); in isoform Alpha cross-link involves residue Lys627. Lys627 is covalently cross-linked (Glycyl lysine isopeptide (Lys-Gly) (interchain with G-Cter in SUMO2)).

The protein belongs to the p53 family. Found in a complex with p53/TP53 and CABLES1. The C-terminal oligomerization domain binds to the ABL1 tyrosine kinase SH3 domain. Interacts with HECW2. Isoform Beta interacts homotypically and with p53/TP53, whereas isoform Alpha does not. Isoform Gamma interacts homotypically and with all p73 isoforms. Isoform Delta interacts with isoform Gamma, isoform Alpha, and homotypically. Isoforms Alpha and Beta interact with HIPK2. Isoform Alpha interacts with RANBP9. Isoform Beta interacts with WWOX. Interacts (via SAM domain) with FBXO45 (via B30.2/SPRY domain). Interacts with YAP1 (phosphorylated form). Interacts with HCK (via SH3 domain); this inhibits TP73 activity and degradation. Interacts (via SAM domain) with NQO1; this interaction is NADH-dependent, stabilizes TP73 in response to oxidative stress and protects it from ubiquitin-independent degradation by the 20S proteasome. In terms of assembly, (Microbial infection) Interacts with Epstein-Barr virus protein EBNA6; this interaction inhibits TP73-mediated apoptotic pathway. Zn(2+) serves as cofactor. Isoform alpha (but not isoform beta) is sumoylated on Lys-627, which potentiates proteasomal degradation but does not affect transcriptional activity. Phosphorylation by PLK1 and PLK3 inhibits the transcription regulator activity and pro-apoptotic function. In terms of processing, higher levels of phosphorylation seen in the brain from patients with Huntington disease. Post-translationally, polyubiquitinated by RCHY1/PIRH2; leading to its degradation by the proteasome. As to expression, expressed in striatal neurons of patients with Huntington disease (at protein level). Brain, kidney, placenta, colon, heart, liver, spleen, skeletal muscle, prostate, thymus and pancreas. Highly expressed in fetal tissue. Expressed in the respiratory epithelium.

Its subcellular location is the nucleus. It localises to the cytoplasm. Participates in the apoptotic response to DNA damage. Isoforms containing the transactivation domain are pro-apoptotic, isoforms lacking the domain are anti-apoptotic and block the function of p53 and transactivating p73 isoforms. May be a tumor suppressor protein. Is an activator of FOXJ1 expression. It is an essential factor for the positive regulation of lung ciliated cell differentiation. The sequence is that of Tumor protein p73 (TP73) from Homo sapiens (Human).